The primary structure comprises 610 residues: Phosphomethylpyrimidine synthase (610 aa).

Substrate is bound by residues Asn216, Met245, Tyr274, His310, 330-332 (SRG), 371-374 (DGLR), and Glu410. His414 contacts Zn(2+). Position 437 (Tyr437) interacts with substrate. Residue His478 coordinates Zn(2+). Cys558, Cys561, and Cys566 together coordinate [4Fe-4S] cluster.

It belongs to the ThiC family. As to quaternary structure, homodimer. It depends on [4Fe-4S] cluster as a cofactor.

It catalyses the reaction 5-amino-1-(5-phospho-beta-D-ribosyl)imidazole + S-adenosyl-L-methionine = 4-amino-2-methyl-5-(phosphooxymethyl)pyrimidine + CO + 5'-deoxyadenosine + formate + L-methionine + 3 H(+). Its pathway is cofactor biosynthesis; thiamine diphosphate biosynthesis. Its function is as follows. Catalyzes the synthesis of the hydroxymethylpyrimidine phosphate (HMP-P) moiety of thiamine from aminoimidazole ribotide (AIR) in a radical S-adenosyl-L-methionine (SAM)-dependent reaction. This chain is Phosphomethylpyrimidine synthase, found in Rhizobium etli (strain ATCC 51251 / DSM 11541 / JCM 21823 / NBRC 15573 / CFN 42).